We begin with the raw amino-acid sequence, 147 residues long: Hemoglobin subunit epsilon (147 aa).

One can recognise a Globin domain in the interval 3-147; that stretch reads HFTAEEKAAI…VAIALGHKYH (145 aa). Phosphoserine is present on residues S14 and S51. Residues H64 and H93 each contribute to the heme b site.

The protein belongs to the globin family. As to quaternary structure, heterotetramer of two alpha chains and two epsilon chains in early embryonic hemoglobin Gower-2; two zeta chains and two epsilon chains in early embryonic hemoglobin Gower-1. In terms of tissue distribution, red blood cells.

The epsilon chain is a beta-type chain of early mammalian embryonic hemoglobin. The sequence is that of Hemoglobin subunit epsilon (HBE1) from Lagothrix lagotricha (Brown woolly monkey).